Consider the following 593-residue polypeptide: MEDYKKRIKNKLNVVPMEPGCYLMKDRNDQVIYVGKAKKLRNRLRSYFTGAHDAKTTRLVGEIRRFEFIVTSSETESLLLELNLIKQYQPRYNILLKDDKSYPFIKITKEKYPRLLVTRTVKQGTGKYFGPYPNAYSAQETKKLLDRIYPYRKCDKMPDKLCLYYHIGQCLGPCVYDVDLSKYAQMTKEITDFLNGEDKTILKSLEERMLTASESLDFERAKEYRDLIQHIQNLTNKQKIMSSDKTIRDVFGYSVDKGWMCIQVFFIRQGNMIKRDTTMIPLQQTEEEEFYTFIGQFYSLNQHILPKEVHVPRNLDKEMIQSVVDTKIVQPARGPKKDMVDLAAHNAKVSLNNKFELISRDESRTIKAIEELGTQMGIQTPIRIEAFDNSNIQGVDPVSAMVTFVDGKPDKKNYRKYKIKTVKGPDDYKSMREVVRRRYSRVLNEGLPLPDLIIVDGGKGHMNGVIDVLQNELGLDIPVAGLQKNDKHQTSELLYGASAEIVPLKKNSQAFYLLHRIQDEVHRFAITFHRQTRQKTGLKSILDDIDGIGSKRKTLLLRSFGSIKKMKEATLEDFKNIGIPENVAKNLHEQLHK.

The GIY-YIG domain occupies 17–94 (MEPGCYLMKD…IKQYQPRYNI (78 aa)). The UVR domain maps to 199–234 (KTILKSLEERMLTASESLDFERAKEYRDLIQHIQNL).

The protein belongs to the UvrC family. In terms of assembly, interacts with UvrB in an incision complex.

Its subcellular location is the cytoplasm. Its function is as follows. The UvrABC repair system catalyzes the recognition and processing of DNA lesions. UvrC both incises the 5' and 3' sides of the lesion. The N-terminal half is responsible for the 3' incision and the C-terminal half is responsible for the 5' incision. The protein is UvrABC system protein C of Staphylococcus aureus (strain MRSA252).